The primary structure comprises 465 residues: VGFKAGVKEYKLTYYTPTYETKDTDILAAFRVTPQPGVPPEEAGAAVAAESSTGTWITVWTDGLTSLDRYKGRCYHIEPVAGEESQFIAYVAYPLDLFEEGSVTNMFTSIVGNVFGFKALRALRLEDLRIPVAYVKTFQGPPHGIQVERDKLNKYGRPLLGCTIKPKLGLSAKNYGRAVYECLRGGLDFTKDDENVNSQPFMRWRDRFLFCAEALYKAQAETGEIKGHYLNATAGTCEEMMKRAIFARELGVPIVMHDYLTGGFTANTSLAHYCRDNGLLLHIHRAMHAVIDRQKNHGIHFRVLAKALRMSGGDHIHSGTVVGKLEGEREITLGFVDLLRDDFVEKDRSRGIYFTQDWVSLPGVLPVASGGIHVWHMPALTEIFGDDSVLQFGGGTLGHPWGNAPGAVANRVALEACVQARNEGRDLAREGNEIIREASKWSPELAAACEVWKEIKFEFEAMDTL.

Lys-4 carries the post-translational modification N6,N6,N6-trimethyllysine. Substrate contacts are provided by Asn-113 and Thr-163. The active-site Proton acceptor is Lys-165. A substrate-binding site is contributed by Lys-167. Residues Lys-191, Asp-193, and Glu-194 each contribute to the Mg(2+) site. Position 191 is an N6-carboxylysine (Lys-191). The Proton acceptor role is filled by His-284. Substrate-binding residues include Arg-285, His-317, and Ser-369.

This sequence belongs to the RuBisCO large chain family. Type I subfamily. In terms of assembly, heterohexadecamer of 8 large chains and 8 small chains; disulfide-linked. The disulfide link is formed within the large subunit homodimers. Requires Mg(2+) as cofactor. The disulfide bond which can form in the large chain dimeric partners within the hexadecamer appears to be associated with oxidative stress and protein turnover.

It is found in the plastid. The protein localises to the chloroplast. The enzyme catalyses 2 (2R)-3-phosphoglycerate + 2 H(+) = D-ribulose 1,5-bisphosphate + CO2 + H2O. It catalyses the reaction D-ribulose 1,5-bisphosphate + O2 = 2-phosphoglycolate + (2R)-3-phosphoglycerate + 2 H(+). Its function is as follows. RuBisCO catalyzes two reactions: the carboxylation of D-ribulose 1,5-bisphosphate, the primary event in carbon dioxide fixation, as well as the oxidative fragmentation of the pentose substrate in the photorespiration process. Both reactions occur simultaneously and in competition at the same active site. The polypeptide is Ribulose bisphosphate carboxylase large chain (Cornus florida (Flowering dogwood)).